A 95-amino-acid chain; its full sequence is Small ribosomal subunit protein bS6 (95 aa).

The protein belongs to the bacterial ribosomal protein bS6 family.

Its function is as follows. Binds together with bS18 to 16S ribosomal RNA. The chain is Small ribosomal subunit protein bS6 from Corynebacterium kroppenstedtii (strain DSM 44385 / JCM 11950 / CIP 105744 / CCUG 35717).